The chain runs to 398 residues: Serine/threonine-protein kinase ppk23 (398 aa).

The Protein kinase domain occupies Tyr-74–Phe-359. ATP-binding positions include Ile-80–Val-88 and Lys-103. Asp-198 acts as the Proton acceptor in catalysis. The interval Phe-359–Lys-398 is disordered. Over residues Val-387–Lys-398 the composition is skewed to polar residues.

Belongs to the protein kinase superfamily. Ser/Thr protein kinase family.

The protein resides in the nucleus. The enzyme catalyses L-seryl-[protein] + ATP = O-phospho-L-seryl-[protein] + ADP + H(+). It catalyses the reaction L-threonyl-[protein] + ATP = O-phospho-L-threonyl-[protein] + ADP + H(+). This is Serine/threonine-protein kinase ppk23 (ppk23) from Schizosaccharomyces pombe (strain 972 / ATCC 24843) (Fission yeast).